Consider the following 107-residue polypeptide: Large ribosomal subunit protein uL24 (107 aa).

This sequence belongs to the universal ribosomal protein uL24 family. As to quaternary structure, part of the 50S ribosomal subunit.

Its function is as follows. One of two assembly initiator proteins, it binds directly to the 5'-end of the 23S rRNA, where it nucleates assembly of the 50S subunit. One of the proteins that surrounds the polypeptide exit tunnel on the outside of the subunit. This chain is Large ribosomal subunit protein uL24, found in Solidesulfovibrio magneticus (strain ATCC 700980 / DSM 13731 / RS-1) (Desulfovibrio magneticus).